Consider the following 101-residue polypeptide: Trp operon repressor homolog (101 aa).

The DNA-binding element occupies 59–82 (QREIQQNLNTSAATITRGSNMIKT).

It belongs to the TrpR family. As to quaternary structure, homodimer.

It localises to the cytoplasm. Its function is as follows. This protein is an aporepressor. When complexed with L-tryptophan it binds the operator region of the trp operon and prevents the initiation of transcription. The chain is Trp operon repressor homolog from Haemophilus influenzae (strain 86-028NP).